The chain runs to 319 residues: Cobalamin biosynthesis protein CobD (319 aa).

4 helical membrane-spanning segments follow: residues 55–75 (AVMW…VLAL), 78–98 (EIHP…VLAG), 153–173 (VDGI…LAMA), and 296–316 (LMWV…CLLV).

Belongs to the CobD/CbiB family.

The protein localises to the cell membrane. It functions in the pathway cofactor biosynthesis; adenosylcobalamin biosynthesis. Converts cobyric acid to cobinamide by the addition of aminopropanol on the F carboxylic group. The chain is Cobalamin biosynthesis protein CobD from Citrobacter koseri (strain ATCC BAA-895 / CDC 4225-83 / SGSC4696).